The chain runs to 346 residues: DNA-directed RNA polymerase subunit alpha (346 aa).

The interval 1-242 (MLIQDGDKLI…DQLSVFINFD (242 aa)) is alpha N-terminal domain (alpha-NTD). The interval 258–346 (LNPNLFKSID…WLKRKEKNEA (89 aa)) is alpha C-terminal domain (alpha-CTD).

The protein belongs to the RNA polymerase alpha chain family. In terms of assembly, homodimer. The RNAP catalytic core consists of 2 alpha, 1 beta, 1 beta' and 1 omega subunit. When a sigma factor is associated with the core the holoenzyme is formed, which can initiate transcription.

It carries out the reaction RNA(n) + a ribonucleoside 5'-triphosphate = RNA(n+1) + diphosphate. Functionally, DNA-dependent RNA polymerase catalyzes the transcription of DNA into RNA using the four ribonucleoside triphosphates as substrates. This Maridesulfovibrio salexigens (strain ATCC 14822 / DSM 2638 / NCIMB 8403 / VKM B-1763) (Desulfovibrio salexigens) protein is DNA-directed RNA polymerase subunit alpha.